The primary structure comprises 377 residues: Short chain dehydrogenase gsfE (377 aa).

5 residues coordinate NADP(+): Asp89, Gln121, Tyr226, Ala266, and Ser268. Tyr226 serves as the catalytic Proton donor.

This sequence belongs to the short-chain dehydrogenases/reductases (SDR) family. Highly divergent.

It catalyses the reaction dehydrogriseofulvin + NADPH + H(+) = griseofulvin + NADP(+). It participates in secondary metabolite biosynthesis; terpenoid biosynthesis. Its function is as follows. Short chain dehydrogenase; part of the gene cluster that mediates the biosynthesis of griseofulvin, an important antifungal drug that has been in use for a long time for treating dermatophyte infections. The first step of the pathway is the formation of the heptaketide backbone by gsfA which is initiated by priming with acetyl-CoA, followed by sequential condensations of 6 malonyl-CoA units. The resulting benzophenone can undergo a spontaneous dehydration to form norlichexanthone. However, the true precursor for the griseofulvin biosynthesis is not norlichexanthone, but the heptaketide benzophenone that is O-methylated at 3-OH by gsfB to produce griseophenone D which is further methylated at 9-OH by gsfC to yield griseophenone C. Griseophenone C is then substrate of halogenase gsfI which is responsible for the regio-specific chlorination at the C13 position to form griseophenone B. The cytochrome P450 gsfF catalyzes the coupling of orcinol and phloroglucinol rings in griseophenone B to form desmethyl-dehydrogriseofulvin A which is further methylated at 5-OH by gsfD to yield dehydrogriseofulvin. Finally, gsfE performs stereospecific reduction of enone 18 of dehydrogriseofulvin to afford the final product griseofulvin. The polypeptide is Short chain dehydrogenase gsfE (Penicillium aethiopicum).